Here is a 715-residue protein sequence, read N- to C-terminus: ATP-dependent zinc metalloprotease FtsH (715 aa).

Over 1 to 10 (MKNKNRGFFR) the chain is Cytoplasmic. Residues 11-31 (SSLSYAFVILAVIFLIYSFFG) form a helical membrane-spanning segment. The Extracellular segment spans residues 32-137 (RSDGSVKHLS…KPAASNFWGS (106 aa)). A helical membrane pass occupies residues 138–158 (MLTLILPTLIMFALLYWMLIG). Topologically, residues 159–715 (SQRGQGGSGG…LLDAVNNKFD (557 aa)) are cytoplasmic. A disordered region spans residues 167 to 187 (GGPGGIMSFGRSKAKPADPKQ). 233–240 (GPPGTGKT) provides a ligand contact to ATP. Zn(2+) is bound at residue His-455. The active site involves Glu-456. The Zn(2+) site is built by His-459 and Asp-531.

This sequence in the central section; belongs to the AAA ATPase family. The protein in the C-terminal section; belongs to the peptidase M41 family. In terms of assembly, homohexamer. It depends on Zn(2+) as a cofactor.

It localises to the cell membrane. Its function is as follows. Acts as a processive, ATP-dependent zinc metallopeptidase for both cytoplasmic and membrane proteins. Plays a role in the quality control of integral membrane proteins. Can complement an E.coli ftsH disruption mutant. The chain is ATP-dependent zinc metalloprotease FtsH from Oenococcus oeni (Leuconostoc oenos).